A 221-amino-acid polypeptide reads, in one-letter code: Guanylate kinase (221 aa).

The Guanylate kinase-like domain occupies 20 to 199 (GLMFILSSPS…CFGKVREILA (180 aa)). Residue 27–34 (SPSGAGKT) participates in ATP binding.

The protein belongs to the guanylate kinase family.

The protein resides in the cytoplasm. The enzyme catalyses GMP + ATP = GDP + ADP. Functionally, essential for recycling GMP and indirectly, cGMP. This is Guanylate kinase from Novosphingobium aromaticivorans (strain ATCC 700278 / DSM 12444 / CCUG 56034 / CIP 105152 / NBRC 16084 / F199).